The following is a 556-amino-acid chain: MNIAEQMKDVLKEEIKAAVLKAGLAEESQIPNVVLETPKDKTHGDYSTNMAMQLARVAKKAPRQIAEEIVAHFDKGKASIEKLDIAGPGFINFYMNNQYLTKLIPSVLEAGEAYGETNIGNGERVQVEFVSANPTGDLHLGHARGAAVGDSLCNVLSKAGYDVSREYYINDAGNQINNLALSVEVRYFEALGLEKPMPEDGYRGEDIIAIGKRLAEEYGDRFVNEEESERLAFFREYGLKYELEKLRKDLENFRVPFDVWYSETSLYQNGKIDKALEALREKGHVYEEDGATWFRSTTFGDDKDRVLIKKDGTYTYLLPDIAYHKDKLDRGFDKLINVWGADHHGYIPRMKAAIEALGYEKGTLEVEIIQLVHLYKNGEKMKMSKRTGKAVTMRDLIEEVGLDAVRYFFAMRSADTHMDFDLDLAVSTSNENPVYYAQYAHARICSMLRQGEEQGLKPAADLDFSHIQSEKEYDLLKTIGGFPEAVAEAAEKRIPHRVTNYIYDLASALHSFYNAEKVIDPENEEKSRARLALMKATQITLNNALQLIGVSAPEKM.

Residues Ala-132–His-142 carry the 'HIGH' region motif.

The protein belongs to the class-I aminoacyl-tRNA synthetase family. As to quaternary structure, monomer.

It localises to the cytoplasm. The enzyme catalyses tRNA(Arg) + L-arginine + ATP = L-arginyl-tRNA(Arg) + AMP + diphosphate. This Bacillus subtilis (strain 168) protein is Arginine--tRNA ligase (argS).